The chain runs to 399 residues: Nicotinate phosphoribosyltransferase 1 (399 aa).

His224 carries the phosphohistidine; by autocatalysis modification.

The protein belongs to the NAPRTase family. In terms of processing, transiently phosphorylated on a His residue during the reaction cycle. Phosphorylation strongly increases the affinity for substrates and increases the rate of nicotinate D-ribonucleotide production. Dephosphorylation regenerates the low-affinity form of the enzyme, leading to product release.

It carries out the reaction nicotinate + 5-phospho-alpha-D-ribose 1-diphosphate + ATP + H2O = nicotinate beta-D-ribonucleotide + ADP + phosphate + diphosphate. It functions in the pathway cofactor biosynthesis; NAD(+) biosynthesis; nicotinate D-ribonucleotide from nicotinate: step 1/1. Functionally, catalyzes the synthesis of beta-nicotinate D-ribonucleotide from nicotinate and 5-phospho-D-ribose 1-phosphate at the expense of ATP. This chain is Nicotinate phosphoribosyltransferase 1, found in Pseudomonas aeruginosa (strain ATCC 15692 / DSM 22644 / CIP 104116 / JCM 14847 / LMG 12228 / 1C / PRS 101 / PAO1).